The chain runs to 190 residues: NADH-quinone oxidoreductase subunit B (190 aa).

4 residues coordinate [4Fe-4S] cluster: Cys39, Cys40, Cys104, and Cys135.

It belongs to the complex I 20 kDa subunit family. NDH-1 is composed of 14 different subunits. Subunits NuoB, C, D, E, F, and G constitute the peripheral sector of the complex. It depends on [4Fe-4S] cluster as a cofactor.

Its subcellular location is the cell inner membrane. It carries out the reaction a quinone + NADH + 5 H(+)(in) = a quinol + NAD(+) + 4 H(+)(out). In terms of biological role, NDH-1 shuttles electrons from NADH, via FMN and iron-sulfur (Fe-S) centers, to quinones in the respiratory chain. The immediate electron acceptor for the enzyme in this species is believed to be a menaquinone. Couples the redox reaction to proton translocation (for every two electrons transferred, four hydrogen ions are translocated across the cytoplasmic membrane), and thus conserves the redox energy in a proton gradient. The chain is NADH-quinone oxidoreductase subunit B from Chlorobium chlorochromatii (strain CaD3).